We begin with the raw amino-acid sequence, 251 residues long: tRNA (guanine-N(7)-)-methyltransferase (251 aa).

The tract at residues 1-29 (MTQTLSSQDPQAPAAPPMPGAAGSAPADV) is disordered. Glu84, Glu109, Asp136, and Asp159 together coordinate S-adenosyl-L-methionine. Asp159 is a catalytic residue. Residue Lys163 coordinates substrate. The interval 165–170 (RHNKRR) is interaction with RNA. Residues Asp195 and 230–233 (TKFE) contribute to the substrate site.

Belongs to the class I-like SAM-binding methyltransferase superfamily. TrmB family.

The enzyme catalyses guanosine(46) in tRNA + S-adenosyl-L-methionine = N(7)-methylguanosine(46) in tRNA + S-adenosyl-L-homocysteine. The protein operates within tRNA modification; N(7)-methylguanine-tRNA biosynthesis. Its function is as follows. Catalyzes the formation of N(7)-methylguanine at position 46 (m7G46) in tRNA. This is tRNA (guanine-N(7)-)-methyltransferase from Acidovorax sp. (strain JS42).